The sequence spans 262 residues: tRNA pseudouridine synthase A (262 aa).

Asp-51 functions as the Nucleophile in the catalytic mechanism. Tyr-109 is a binding site for substrate.

It belongs to the tRNA pseudouridine synthase TruA family. Homodimer.

The enzyme catalyses uridine(38/39/40) in tRNA = pseudouridine(38/39/40) in tRNA. In terms of biological role, formation of pseudouridine at positions 38, 39 and 40 in the anticodon stem and loop of transfer RNAs. The chain is tRNA pseudouridine synthase A from Legionella pneumophila (strain Lens).